We begin with the raw amino-acid sequence, 286 residues long: uncharacterized protein (286 aa).

An AB hydrolase-1 domain is found at 26–268 (PLIILCHGFC…DACHYDIYEG (243 aa)).

This sequence to E.coli YcjY.

This is an uncharacterized protein from Escherichia coli.